We begin with the raw amino-acid sequence, 178 residues long: Large ribosomal subunit protein uL6 (178 aa).

The protein belongs to the universal ribosomal protein uL6 family. Part of the 50S ribosomal subunit.

Its function is as follows. This protein binds to the 23S rRNA, and is important in its secondary structure. It is located near the subunit interface in the base of the L7/L12 stalk, and near the tRNA binding site of the peptidyltransferase center. The polypeptide is Large ribosomal subunit protein uL6 (Staphylococcus carnosus (strain TM300)).